We begin with the raw amino-acid sequence, 196 residues long: Probable nicotinate-nucleotide adenylyltransferase (196 aa).

Belongs to the NadD family.

The catalysed reaction is nicotinate beta-D-ribonucleotide + ATP + H(+) = deamido-NAD(+) + diphosphate. It functions in the pathway cofactor biosynthesis; NAD(+) biosynthesis; deamido-NAD(+) from nicotinate D-ribonucleotide: step 1/1. Its function is as follows. Catalyzes the reversible adenylation of nicotinate mononucleotide (NaMN) to nicotinic acid adenine dinucleotide (NaAD). The protein is Probable nicotinate-nucleotide adenylyltransferase of Thermotoga petrophila (strain ATCC BAA-488 / DSM 13995 / JCM 10881 / RKU-1).